A 350-amino-acid polypeptide reads, in one-letter code: MPVLHNRISNDALKAKMLAESEPRTTISFYKYFHIADPKATRDALYQLFTALDVFGRVYLAHEGINAQISVPASNVETFRAQLYAFDPALEGLRLNIALDDDGKSFWVLRMKVRDRIVADGIDDPHFDASNVGEYLQAAEVNAMLDDPDALFIDMRNHYEYEVGHFENALEIPADTFREQLPKAVEMMQAHKDKKIVMYCTGGIRCEKASAWMKHNGFNKVWHIEGGIIEYARKAREQGLPVRFIGKNFVFDERMGERISDEIIAHCHQCGAPCDSHTNCKNDGCHLLFIQCPVCAEKYKGCCSEICCEESALPPEEQRRRRAGRENGNKIFNKSRGRLNTTLGIPDPTE.

The Rhodanese domain maps to D146–L240. Catalysis depends on C200, which acts as the Cysteine persulfide intermediate.

The protein belongs to the TrhO family.

It catalyses the reaction uridine(34) in tRNA + AH2 + O2 = 5-hydroxyuridine(34) in tRNA + A + H2O. Its function is as follows. Catalyzes oxygen-dependent 5-hydroxyuridine (ho5U) modification at position 34 in tRNAs, the first step in 5-carboxymethoxyuridine (cmo5U) biosynthesis. May be part of an alternate pathway, which is able to bypass cmo5U biogenesis in a subset of tRNAs under aerobic conditions. This is tRNA uridine(34) hydroxylase from Escherichia coli O17:K52:H18 (strain UMN026 / ExPEC).